A 120-amino-acid polypeptide reads, in one-letter code: uncharacterized protein (120 aa).

A disordered region spans residues Thr79 to Lys120. Basic residues predominate over residues Gly110–Lys120.

This is an uncharacterized protein from Schizosaccharomyces pombe (strain 972 / ATCC 24843) (Fission yeast).